A 248-amino-acid polypeptide reads, in one-letter code: 2,3-bisphosphoglycerate-dependent phosphoglycerate mutase (248 aa).

Substrate is bound by residues 8–15, 21–22, arginine 60, 87–90, lysine 98, and 114–115; these read RHGESTWN, TG, ERHY, and RR. The active-site Tele-phosphohistidine intermediate is histidine 9. Residue glutamate 87 is the Proton donor/acceptor of the active site. Residues 117–137 form a disordered region; that stretch reads YDTPPPALEPTDPRASYDDPR. Positions 127 to 137 are enriched in basic and acidic residues; the sequence is TDPRASYDDPR. A substrate-binding site is contributed by 183-184; it reads GN.

Belongs to the phosphoglycerate mutase family. BPG-dependent PGAM subfamily. As to quaternary structure, homodimer.

It carries out the reaction (2R)-2-phosphoglycerate = (2R)-3-phosphoglycerate. The protein operates within carbohydrate degradation; glycolysis; pyruvate from D-glyceraldehyde 3-phosphate: step 3/5. Functionally, catalyzes the interconversion of 2-phosphoglycerate and 3-phosphoglycerate. In Cupriavidus taiwanensis (strain DSM 17343 / BCRC 17206 / CCUG 44338 / CIP 107171 / LMG 19424 / R1) (Ralstonia taiwanensis (strain LMG 19424)), this protein is 2,3-bisphosphoglycerate-dependent phosphoglycerate mutase.